A 395-amino-acid chain; its full sequence is ATP phosphoribosyltransferase regulatory subunit (395 aa).

It belongs to the class-II aminoacyl-tRNA synthetase family. HisZ subfamily. In terms of assembly, heteromultimer composed of HisG and HisZ subunits.

The protein localises to the cytoplasm. It participates in amino-acid biosynthesis; L-histidine biosynthesis; L-histidine from 5-phospho-alpha-D-ribose 1-diphosphate: step 1/9. Its function is as follows. Required for the first step of histidine biosynthesis. May allow the feedback regulation of ATP phosphoribosyltransferase activity by histidine. In Pseudomonas syringae pv. tomato (strain ATCC BAA-871 / DC3000), this protein is ATP phosphoribosyltransferase regulatory subunit.